We begin with the raw amino-acid sequence, 557 residues long: Beta-amylase 2, chloroplastic (557 aa).

The N-terminal 38 residues, 1 to 38, are a transit peptide targeting the chloroplast; sequence MMSLNLAHQTGAAAAVAPAAPRTAVVAAAAGTVSAPAV. Substrate-binding residues include Asp-135, His-175, and Asp-183. Glu-267 acts as the Proton donor in catalysis. Substrate-binding residues include Lys-380, His-385, and Thr-427. Glu-465 (proton acceptor) is an active-site residue. Residues 466–467 and Arg-499 each bind substrate; that span reads NA.

Belongs to the glycosyl hydrolase 14 family.

The protein localises to the plastid. It localises to the chloroplast. The enzyme catalyses Hydrolysis of (1-&gt;4)-alpha-D-glucosidic linkages in polysaccharides so as to remove successive maltose units from the non-reducing ends of the chains.. Its function is as follows. Possesses beta-amylase activity in vitro. May be involved in cold resistance by mediating the accumulation of maltose upon freezing stress, thus contributing to the protection of membranes. This Oryza sativa subsp. japonica (Rice) protein is Beta-amylase 2, chloroplastic.